The following is a 132-amino-acid chain: Small ribosomal subunit protein uS8 (132 aa).

Belongs to the universal ribosomal protein uS8 family. As to quaternary structure, part of the 30S ribosomal subunit. Contacts proteins S5 and S12.

Its function is as follows. One of the primary rRNA binding proteins, it binds directly to 16S rRNA central domain where it helps coordinate assembly of the platform of the 30S subunit. This chain is Small ribosomal subunit protein uS8, found in Agrobacterium fabrum (strain C58 / ATCC 33970) (Agrobacterium tumefaciens (strain C58)).